A 168-amino-acid polypeptide reads, in one-letter code: Crossover junction endodeoxyribonuclease RuvC (168 aa).

Active-site residues include Asp9, Glu70, and Asp145. The Mg(2+) site is built by Asp9, Glu70, and Asp145.

It belongs to the RuvC family. In terms of assembly, homodimer which binds Holliday junction (HJ) DNA. The HJ becomes 2-fold symmetrical on binding to RuvC with unstacked arms; it has a different conformation from HJ DNA in complex with RuvA. In the full resolvosome a probable DNA-RuvA(4)-RuvB(12)-RuvC(2) complex forms which resolves the HJ. Mg(2+) serves as cofactor.

It localises to the cytoplasm. The catalysed reaction is Endonucleolytic cleavage at a junction such as a reciprocal single-stranded crossover between two homologous DNA duplexes (Holliday junction).. Functionally, the RuvA-RuvB-RuvC complex processes Holliday junction (HJ) DNA during genetic recombination and DNA repair. Endonuclease that resolves HJ intermediates. Cleaves cruciform DNA by making single-stranded nicks across the HJ at symmetrical positions within the homologous arms, yielding a 5'-phosphate and a 3'-hydroxyl group; requires a central core of homology in the junction. The consensus cleavage sequence is 5'-(A/T)TT(C/G)-3'. Cleavage occurs on the 3'-side of the TT dinucleotide at the point of strand exchange. HJ branch migration catalyzed by RuvA-RuvB allows RuvC to scan DNA until it finds its consensus sequence, where it cleaves and resolves the cruciform DNA. This Chlamydia felis (strain Fe/C-56) (Chlamydophila felis) protein is Crossover junction endodeoxyribonuclease RuvC.